Consider the following 261-residue polypeptide: Monensin polyketide synthase putative ketoacyl reductase (261 aa).

10-34 (LVTGATSGIGLATARLLAAQGHLVF) contributes to the NAD(+) binding site. Ser-144 serves as a coordination point for substrate. Tyr-157 (proton acceptor) is an active-site residue.

It belongs to the short-chain dehydrogenases/reductases (SDR) family.

Its pathway is antifungal biosynthesis; monensin biosynthesis. The polypeptide is Monensin polyketide synthase putative ketoacyl reductase (Streptomyces virginiae (Streptomyces cinnamonensis)).